The sequence spans 732 residues: uncharacterized protein (732 aa).

A disordered region spans residues 145 to 207 (ETLRDSVINP…RRRPEMASPH (63 aa)). Over residues 170-179 (KGHETLERGS) the composition is skewed to basic and acidic residues. A Reverse transcriptase domain is found at 176 to 524 (ERGSKALGPE…KKIPFLGYLI (349 aa)).

The protein localises to the mitochondrion. This is an uncharacterized protein from Marchantia polymorpha (Common liverwort).